The sequence spans 432 residues: Glutamate-1-semialdehyde 2,1-aminomutase (432 aa).

Lys269 carries the N6-(pyridoxal phosphate)lysine modification.

Belongs to the class-III pyridoxal-phosphate-dependent aminotransferase family. HemL subfamily. Homodimer. Pyridoxal 5'-phosphate serves as cofactor.

It localises to the cytoplasm. It carries out the reaction (S)-4-amino-5-oxopentanoate = 5-aminolevulinate. Its pathway is porphyrin-containing compound metabolism; protoporphyrin-IX biosynthesis; 5-aminolevulinate from L-glutamyl-tRNA(Glu): step 2/2. The protein operates within porphyrin-containing compound metabolism; chlorophyll biosynthesis. The sequence is that of Glutamate-1-semialdehyde 2,1-aminomutase from Chloroherpeton thalassium (strain ATCC 35110 / GB-78).